A 227-amino-acid polypeptide reads, in one-letter code: Cytochrome c oxidase subunit 2 (227 aa).

Topologically, residues 1–14 are mitochondrial intermembrane; sequence MAYPFELGFQDATS. A helical transmembrane segment spans residues 15–45; it reads PIMEELLHFHDHTLMIVFLISSLVLYIISLM. At 46 to 59 the chain is on the mitochondrial matrix side; it reads LTTKLTHTSTMDAQ. Residues 60–87 traverse the membrane as a helical segment; sequence EVETIWTILPAIILILIALPSLRILYMM. The Mitochondrial intermembrane portion of the chain corresponds to 88-227; that stretch reads DEINDPSLTV…HFENWSSSML (140 aa). H161, C196, E198, C200, H204, and M207 together coordinate Cu cation. A Mg(2+)-binding site is contributed by E198.

The protein belongs to the cytochrome c oxidase subunit 2 family. As to quaternary structure, component of the cytochrome c oxidase (complex IV, CIV), a multisubunit enzyme composed of 14 subunits. The complex is composed of a catalytic core of 3 subunits MT-CO1, MT-CO2 and MT-CO3, encoded in the mitochondrial DNA, and 11 supernumerary subunits COX4I, COX5A, COX5B, COX6A, COX6B, COX6C, COX7A, COX7B, COX7C, COX8 and NDUFA4, which are encoded in the nuclear genome. The complex exists as a monomer or a dimer and forms supercomplexes (SCs) in the inner mitochondrial membrane with NADH-ubiquinone oxidoreductase (complex I, CI) and ubiquinol-cytochrome c oxidoreductase (cytochrome b-c1 complex, complex III, CIII), resulting in different assemblies (supercomplex SCI(1)III(2)IV(1) and megacomplex MCI(2)III(2)IV(2)). Found in a complex with TMEM177, COA6, COX18, COX20, SCO1 and SCO2. Interacts with TMEM177 in a COX20-dependent manner. Interacts with COX20. Interacts with COX16. Cu cation serves as cofactor.

The protein resides in the mitochondrion inner membrane. The catalysed reaction is 4 Fe(II)-[cytochrome c] + O2 + 8 H(+)(in) = 4 Fe(III)-[cytochrome c] + 2 H2O + 4 H(+)(out). Functionally, component of the cytochrome c oxidase, the last enzyme in the mitochondrial electron transport chain which drives oxidative phosphorylation. The respiratory chain contains 3 multisubunit complexes succinate dehydrogenase (complex II, CII), ubiquinol-cytochrome c oxidoreductase (cytochrome b-c1 complex, complex III, CIII) and cytochrome c oxidase (complex IV, CIV), that cooperate to transfer electrons derived from NADH and succinate to molecular oxygen, creating an electrochemical gradient over the inner membrane that drives transmembrane transport and the ATP synthase. Cytochrome c oxidase is the component of the respiratory chain that catalyzes the reduction of oxygen to water. Electrons originating from reduced cytochrome c in the intermembrane space (IMS) are transferred via the dinuclear copper A center (CU(A)) of subunit 2 and heme A of subunit 1 to the active site in subunit 1, a binuclear center (BNC) formed by heme A3 and copper B (CU(B)). The BNC reduces molecular oxygen to 2 water molecules using 4 electrons from cytochrome c in the IMS and 4 protons from the mitochondrial matrix. The chain is Cytochrome c oxidase subunit 2 (MT-CO2) from Neotamias bulleri (Buller's chipmunk).